Reading from the N-terminus, the 207-residue chain is Cytochrome c biogenesis ATP-binding export protein CcmA (207 aa).

The ABC transporter domain occupies 4–207 (LEVRELLCER…RISLTQTRAV (204 aa)). An ATP-binding site is contributed by 36–43 (GSNGAGKT).

This sequence belongs to the ABC transporter superfamily. CcmA exporter (TC 3.A.1.107) family. In terms of assembly, the complex is composed of two ATP-binding proteins (CcmA) and two transmembrane proteins (CcmB).

It is found in the cell inner membrane. It carries out the reaction heme b(in) + ATP + H2O = heme b(out) + ADP + phosphate + H(+). In terms of biological role, part of the ABC transporter complex CcmAB involved in the biogenesis of c-type cytochromes; once thought to export heme, this seems not to be the case, but its exact role is uncertain. Responsible for energy coupling to the transport system. The polypeptide is Cytochrome c biogenesis ATP-binding export protein CcmA (Shigella dysenteriae serotype 1 (strain Sd197)).